We begin with the raw amino-acid sequence, 235 residues long: Sugar fermentation stimulation protein homolog (235 aa).

This sequence belongs to the SfsA family.

The chain is Sugar fermentation stimulation protein homolog from Pseudomonas aeruginosa (strain LESB58).